The chain runs to 159 residues: U-actitoxin-Avd13a/b (159 aa).

An N-terminal signal peptide occupies residues 1–18 (MKSIFLVFFAVCLVKAEA). The propeptide occupies 19–26 (GKGRKREP). 2 disulfide bridges follow: Cys-33–Cys-45 and Cys-36–Cys-52. Positions 59–60 (EP) are excised as a propeptide. 2 disulfide bridges follow: Cys-67–Cys-79 and Cys-70–Cys-86. Residues 93–94 (EP) constitute a propeptide that is removed on maturation. Intrachain disulfides connect Cys-101-Cys-113 and Cys-104-Cys-120. The propeptide occupies 127 to 128 (EP). 2 cysteine pairs are disulfide-bonded: Cys-135–Cys-147 and Cys-138–Cys-154.

The protein belongs to the sea anemone BBH family.

It localises to the secreted. Its subcellular location is the nematocyst. In terms of biological role, inhibits ion channels. This is U-actitoxin-Avd13a/b from Anemonia viridis (Snakelocks anemone).